Reading from the N-terminus, the 689-residue chain is Protein asunder (689 aa).

Residues 521–550 are a coiled coil; sequence NGARLKLSKAKDQYRLLYRELEQLIQLNAT. The interval 578 to 619 is disordered; sequence GASLLRSYTESPLSPERLEPITSGSASGSSNSNSLLKASKRR. A compositionally biased stretch (low complexity) spans 600 to 614; the sequence is SGSASGSSNSNSLLK. Positions 613-619 match the Nuclear localization signal (NLS) motif; that stretch reads LKASKRR.

Belongs to the Integrator subunit 13 family. Belongs to the multiprotein complex Integrator, at least composed of IntS1, IntS2, IntS3, IntS4, omd/IntS5, IntS6, defl/IntS7, IntS8, IntS9, IntS10, IntS11, IntS12, asun/IntS13, IntS14 and IntS15. The core complex associates with protein phosphatase 2A subunits mts/PP2A and Pp2A-29B, to form the Integrator-PP2A (INTAC) complex. Post-translationally, phosphorylated.

It localises to the nucleus. The protein localises to the cytoplasm. Its subcellular location is the perinuclear region. Component of the integrator complex, a multiprotein complex that terminates RNA polymerase II (Pol II) transcription in the promoter-proximal region of genes. The integrator complex provides a quality checkpoint during transcription elongation by driving premature transcription termination of transcripts that are unfavorably configured for transcriptional elongation: the complex terminates transcription by (1) catalyzing dephosphorylation of the C-terminal domain (CTD) of Pol II subunit Polr2A/Rbp1 and Spt5, and (2) degrading the exiting nascent RNA transcript via endonuclease activity. The integrator complex is also involved in the 3'-end processing of the U7 snRNA, and also the spliceosomal snRNAs U1, U2, U4 and U5. The polypeptide is Protein asunder (asun) (Drosophila erecta (Fruit fly)).